Reading from the N-terminus, the 397-residue chain is 1-deoxy-D-xylulose 5-phosphate reductoisomerase (397 aa).

Residues Thr10, Gly11, Ser12, Ile13, Asn38, and Asn125 each contribute to the NADPH site. Lys126 is a binding site for 1-deoxy-D-xylulose 5-phosphate. Glu127 serves as a coordination point for NADPH. Asp151 contributes to the Mn(2+) binding site. The 1-deoxy-D-xylulose 5-phosphate site is built by Ser152, Glu153, Ser187, and His210. Glu153 serves as a coordination point for Mn(2+). NADPH is bound at residue Gly216. Residues Ser223, Asn228, Lys229, and Glu232 each coordinate 1-deoxy-D-xylulose 5-phosphate. Mn(2+) is bound at residue Glu232.

It belongs to the DXR family. As to quaternary structure, homodimer. Requires Mg(2+) as cofactor. Mn(2+) serves as cofactor.

It catalyses the reaction 2-C-methyl-D-erythritol 4-phosphate + NADP(+) = 1-deoxy-D-xylulose 5-phosphate + NADPH + H(+). The protein operates within isoprenoid biosynthesis; isopentenyl diphosphate biosynthesis via DXP pathway; isopentenyl diphosphate from 1-deoxy-D-xylulose 5-phosphate: step 1/6. Its function is as follows. Catalyzes the NADPH-dependent rearrangement and reduction of 1-deoxy-D-xylulose-5-phosphate (DXP) to 2-C-methyl-D-erythritol 4-phosphate (MEP). This is 1-deoxy-D-xylulose 5-phosphate reductoisomerase from Blochmanniella pennsylvanica (strain BPEN).